The primary structure comprises 581 residues: Lipoprotein LpqB (581 aa).

Residues Met-1–Ala-23 form the signal peptide. Cys-24 carries the N-palmitoyl cysteine lipid modification. A lipid anchor (S-diacylglycerol cysteine) is attached at Cys-24.

It belongs to the LpqB lipoprotein family.

The protein localises to the cell membrane. The polypeptide is Lipoprotein LpqB (Corynebacterium diphtheriae (strain ATCC 700971 / NCTC 13129 / Biotype gravis)).